A 645-amino-acid polypeptide reads, in one-letter code: Cell pattern formation-associated protein stuA (645 aa).

The segment at 1–52 is disordered; that stretch reads MNQMQPYADVHQPHMSTAAHAPASGPPAGLSHYSYPHQPSMMQPQQQQHQYG. Positions 18–52 are enriched in low complexity; the sequence is AAHAPASGPPAGLSHYSYPHQPSMMQPQQQQHQYG. Positions 124-230 constitute an HTH APSES-type domain; it reads RVTATLWEDE…HDIGALLYHP (107 aa). Residues 158-179 constitute a DNA-binding region (H-T-H motif); sequence GTKLLNVAGMTRGRRDGILKSE. The interval 246-645 is disordered; it reads VDRNRRPDSM…HTLAAQRARR (400 aa). Composition is skewed to polar residues over residues 254–271 and 279–288; these read SMQTQQRYMAGPTTSQAP and MTNSVGSAMS. Residues 317–330 are compositionally biased toward low complexity; that stretch reads SASSMMGMGNQGSS. Residues 336-365 are compositionally biased toward polar residues; that stretch reads ANVQQHPQGNQPLSIDTGLSNARSVPTTPA. Residues 469-481 are compositionally biased toward low complexity; that stretch reads PYNGNRGPYGYNP. 2 stretches are compositionally biased toward polar residues: residues 502 to 542 and 569 to 584; these read SPHQ…NLYN and YASQGYAPTNGVNSSG. The nuclear localization domain stretch occupies residues 585 to 613; sequence KRGRDEEDAETYRPDSVQGDDMGGLKRRK. The segment covering 586-597 has biased composition (basic and acidic residues); the sequence is RGRDEEDAETYR.

It belongs to the EFG1/PHD1/stuA family.

The protein resides in the nucleus. Its function is as follows. Transcription factor that regulates asexual reproduction. Binds the StuA-response elements (StRE) with the consensus sequence 5'-(A/T)CGCG(T/A)N(A/C)-3' at the promoters of target genes. Regulates the expression of several effector genes (AvrLm1, AvrLm6 and AvrLm4-7) during infection stage. The polypeptide is Cell pattern formation-associated protein stuA (Leptosphaeria maculans (strain JN3 / isolate v23.1.3 / race Av1-4-5-6-7-8) (Blackleg fungus)).